A 450-amino-acid polypeptide reads, in one-letter code: Neutral protease 2 homolog AFUB_070680 (450 aa).

An N-terminal signal peptide occupies residues 1-19 (MKITALASAILAVAQGALA). Positions 20–172 (LPARAPALDI…PASIKPLDRR (153 aa)) are excised as a propeptide. 2 cysteine pairs are disulfide-bonded: cysteine 179-cysteine 251 and cysteine 258-cysteine 276. Residue histidine 300 participates in Zn(2+) binding. The active site involves glutamate 301. Zn(2+) is bound by residues histidine 304 and aspartate 315. Polar residues predominate over residues 364-392 (QPGQTEPGTQTMWDGYSQPGQTEPGTQTM). The interval 364-416 (QPGQTEPGTQTMWDGYSQPGQTEPGTQTMWDGYSQPGQTEPGTQTTWDGYSQP) is disordered. Low complexity predominate over residues 398–409 (QPGQTEPGTQTT).

This sequence belongs to the peptidase M35 family. The cofactor is Zn(2+).

It is found in the secreted. The enzyme catalyses Preferential cleavage of bonds with hydrophobic residues in P1'. Also 3-Asn-|-Gln-4 and 8-Gly-|-Ser-9 bonds in insulin B chain.. Functionally, secreted metalloproteinase that allows assimilation of proteinaceous substrates. Shows high activities on basic nuclear substrates such as histone and protamine. May be involved in virulence. This chain is Neutral protease 2 homolog AFUB_070680, found in Aspergillus fumigatus (strain ATCC MYA-4609 / CBS 101355 / FGSC A1100 / Af293) (Neosartorya fumigata).